A 364-amino-acid polypeptide reads, in one-letter code: Phosphoserine aminotransferase (364 aa).

Arg-46 is a binding site for L-glutamate. Pyridoxal 5'-phosphate is bound by residues 80–81 (AR), Trp-106, Thr-157, Asp-176, and Gln-199. Position 200 is an N6-(pyridoxal phosphate)lysine (Lys-200). 241 to 242 (NT) contributes to the pyridoxal 5'-phosphate binding site.

The protein belongs to the class-V pyridoxal-phosphate-dependent aminotransferase family. SerC subfamily. Homodimer. The cofactor is pyridoxal 5'-phosphate.

It localises to the cytoplasm. The enzyme catalyses O-phospho-L-serine + 2-oxoglutarate = 3-phosphooxypyruvate + L-glutamate. It catalyses the reaction 4-(phosphooxy)-L-threonine + 2-oxoglutarate = (R)-3-hydroxy-2-oxo-4-phosphooxybutanoate + L-glutamate. It participates in amino-acid biosynthesis; L-serine biosynthesis; L-serine from 3-phospho-D-glycerate: step 2/3. Its pathway is cofactor biosynthesis; pyridoxine 5'-phosphate biosynthesis; pyridoxine 5'-phosphate from D-erythrose 4-phosphate: step 3/5. Catalyzes the reversible conversion of 3-phosphohydroxypyruvate to phosphoserine and of 3-hydroxy-2-oxo-4-phosphonooxybutanoate to phosphohydroxythreonine. The sequence is that of Phosphoserine aminotransferase from Vibrio vulnificus (strain CMCP6).